Here is a 218-residue protein sequence, read N- to C-terminus: Cell division protein SepF (218 aa).

Residues 24–115 (EDVTASTDNV…IANRREQYQQ (92 aa)) form a disordered region. Polar residues predominate over residues 28-43 (ASTDNVIPRSQQSVRA). Positions 47-63 (PKQEPRNNHVQQDHQAR) are enriched in basic and acidic residues.

Belongs to the SepF family. In terms of assembly, homodimer. Interacts with FtsZ.

The protein localises to the cytoplasm. Its function is as follows. Cell division protein that is part of the divisome complex and is recruited early to the Z-ring. Probably stimulates Z-ring formation, perhaps through the cross-linking of FtsZ protofilaments. Its function overlaps with FtsA. The polypeptide is Cell division protein SepF (Streptococcus pyogenes serotype M4 (strain MGAS10750)).